The following is a 247-amino-acid chain: Segregation and condensation protein A (247 aa).

Belongs to the ScpA family. As to quaternary structure, component of a cohesin-like complex composed of ScpA, ScpB and the Smc homodimer, in which ScpA and ScpB bind to the head domain of Smc. The presence of the three proteins is required for the association of the complex with DNA.

It localises to the cytoplasm. Functionally, participates in chromosomal partition during cell division. May act via the formation of a condensin-like complex containing Smc and ScpB that pull DNA away from mid-cell into both cell halves. The chain is Segregation and condensation protein A from Bacillus cereus (strain ATCC 10987 / NRS 248).